The chain runs to 122 residues: Cytochrome b-c1 complex subunit 7-2, mitochondrial (122 aa).

The protein belongs to the UQCRB/QCR7 family. In terms of assembly, component of the ubiquinol-cytochrome c oxidoreductase (cytochrome b-c1 complex, complex III, CIII), a multisubunit enzyme composed of 10 subunits. The complex is composed of 3 respiratory subunits cytochrome b (MT-CYB), cytochrome c1 (CYC1-1 or CYC1-2) and Rieske protein (UCR1-1 or UCR1-2), 2 core protein subunits MPPalpha1 (or MPPalpha2) and MPPB, and 5 low-molecular weight protein subunits QCR7-1 (or QCR7-2), UCRQ-1 (or UCRQ-2), QCR9, UCRY and probably QCR6-1 (or QCR6-2). The complex exists as an obligatory dimer and forms supercomplexes (SCs) in the inner mitochondrial membrane with NADH-ubiquinone oxidoreductase (complex I, CI), resulting in different assemblies (supercomplexes SCI(1)III(2) and SCI(2)III(4)).

It localises to the mitochondrion inner membrane. Its function is as follows. Component of the ubiquinol-cytochrome c oxidoreductase, a multisubunit transmembrane complex that is part of the mitochondrial electron transport chain which drives oxidative phosphorylation. The respiratory chain contains 3 multisubunit complexes succinate dehydrogenase (complex II, CII), ubiquinol-cytochrome c oxidoreductase (cytochrome b-c1 complex, complex III, CIII) and cytochrome c oxidase (complex IV, CIV), that cooperate to transfer electrons derived from NADH and succinate to molecular oxygen, creating an electrochemical gradient over the inner membrane that drives transmembrane transport and the ATP synthase. The cytochrome b-c1 complex catalyzes electron transfer from ubiquinol to cytochrome c, linking this redox reaction to translocation of protons across the mitochondrial inner membrane, with protons being carried across the membrane as hydrogens on the quinol. In the process called Q cycle, 2 protons are consumed from the matrix, 4 protons are released into the intermembrane space and 2 electrons are passed to cytochrome c. The sequence is that of Cytochrome b-c1 complex subunit 7-2, mitochondrial (QCR7-2) from Arabidopsis thaliana (Mouse-ear cress).